Consider the following 263-residue polypeptide: Hydroxyethylthiazole kinase (263 aa).

M41 provides a ligand contact to substrate. 2 residues coordinate ATP: R117 and S163. G190 serves as a coordination point for substrate.

The protein belongs to the Thz kinase family. Requires Mg(2+) as cofactor.

It carries out the reaction 5-(2-hydroxyethyl)-4-methylthiazole + ATP = 4-methyl-5-(2-phosphooxyethyl)-thiazole + ADP + H(+). Its pathway is cofactor biosynthesis; thiamine diphosphate biosynthesis; 4-methyl-5-(2-phosphoethyl)-thiazole from 5-(2-hydroxyethyl)-4-methylthiazole: step 1/1. Functionally, catalyzes the phosphorylation of the hydroxyl group of 4-methyl-5-beta-hydroxyethylthiazole (THZ). The chain is Hydroxyethylthiazole kinase from Lactiplantibacillus plantarum (strain ATCC BAA-793 / NCIMB 8826 / WCFS1) (Lactobacillus plantarum).